The primary structure comprises 498 residues: Glycerol kinase (498 aa).

T12 is an ADP binding site. Residues T12, T13, and S14 each coordinate ATP. T12 serves as a coordination point for sn-glycerol 3-phosphate. R16 contributes to the ADP binding site. 4 residues coordinate sn-glycerol 3-phosphate: R82, E83, Y134, and D243. Glycerol contacts are provided by R82, E83, Y134, D243, and Q244. The ADP site is built by T265 and G308. ATP-binding residues include T265, G308, Q312, and G412. G412 is a binding site for ADP.

Belongs to the FGGY kinase family.

It catalyses the reaction glycerol + ATP = sn-glycerol 3-phosphate + ADP + H(+). It functions in the pathway polyol metabolism; glycerol degradation via glycerol kinase pathway; sn-glycerol 3-phosphate from glycerol: step 1/1. Its activity is regulated as follows. Inhibited by fructose 1,6-bisphosphate (FBP). Its function is as follows. Key enzyme in the regulation of glycerol uptake and metabolism. Catalyzes the phosphorylation of glycerol to yield sn-glycerol 3-phosphate. In Rhizobium rhizogenes (strain K84 / ATCC BAA-868) (Agrobacterium radiobacter), this protein is Glycerol kinase.